We begin with the raw amino-acid sequence, 148 residues long: Probable histone H2B.2 (148 aa).

The segment covering 1 to 32 (MAPKGEKKPAEKKPAEEKKSTVAEKAPAEKKP) has biased composition (basic and acidic residues). The disordered stretch occupies residues 1 to 57 (MAPKGEKKPAEKKPAEEKKSTVAEKAPAEKKPKAGKKLPKEGGSAAGEKKKKRSKKS). Residues lysine 7, lysine 36, and lysine 37 each carry the N6-acetyllysine modification. A Glycyl lysine isopeptide (Lys-Gly) (interchain with G-Cter in ubiquitin) cross-link involves residue lysine 144.

Belongs to the histone H2B family. In terms of assembly, the nucleosome is a histone octamer containing two molecules each of H2A, H2B, H3 and H4 assembled in one H3-H4 heterotetramer and two H2A-H2B heterodimers. The octamer wraps approximately 147 bp of DNA. Can be acetylated to form H2BK6ac, H2BK33ac and H2BK34ac. Post-translationally, monoubiquitinated to form H2BK143ub1; may give a specific tag for epigenetic transcriptional activation.

The protein localises to the nucleus. It is found in the chromosome. In terms of biological role, core component of nucleosome. Nucleosomes wrap and compact DNA into chromatin, limiting DNA accessibility to the cellular machineries which require DNA as a template. Histones thereby play a central role in transcription regulation, DNA repair, DNA replication and chromosomal stability. DNA accessibility is regulated via a complex set of post-translational modifications of histones, also called histone code, and nucleosome remodeling. The sequence is that of Probable histone H2B.2 from Medicago truncatula (Barrel medic).